The following is a 290-amino-acid chain: NH(3)-dependent NAD(+) synthetase (290 aa).

ATP is bound at residue 33-40 (GVSGGVDS). Asp-39 is a Mg(2+) binding site. Arg-154 serves as a coordination point for deamido-NAD(+). Thr-174 is an ATP binding site. Residue Glu-179 participates in Mg(2+) binding. Deamido-NAD(+) is bound by residues Lys-187 and Asp-194. ATP-binding residues include Lys-203 and Ser-225.

The protein belongs to the NAD synthetase family. As to quaternary structure, homodimer.

It catalyses the reaction deamido-NAD(+) + NH4(+) + ATP = AMP + diphosphate + NAD(+) + H(+). Its pathway is cofactor biosynthesis; NAD(+) biosynthesis; NAD(+) from deamido-NAD(+) (ammonia route): step 1/1. Functionally, catalyzes the ATP-dependent amidation of deamido-NAD to form NAD. Uses ammonia as a nitrogen source. The protein is NH(3)-dependent NAD(+) synthetase of Thermotoga neapolitana (strain ATCC 49049 / DSM 4359 / NBRC 107923 / NS-E).